The sequence spans 212 residues: Thiamine-phosphate synthase (212 aa).

Residues 39-43 (QLREK) and N71 each bind 4-amino-2-methyl-5-(diphosphooxymethyl)pyrimidine. 2 residues coordinate Mg(2+): D72 and D91. S110 contacts 4-amino-2-methyl-5-(diphosphooxymethyl)pyrimidine. 137-139 (TPT) contributes to the 2-[(2R,5Z)-2-carboxy-4-methylthiazol-5(2H)-ylidene]ethyl phosphate binding site. K140 contacts 4-amino-2-methyl-5-(diphosphooxymethyl)pyrimidine. Residue G168 participates in 2-[(2R,5Z)-2-carboxy-4-methylthiazol-5(2H)-ylidene]ethyl phosphate binding.

The protein belongs to the thiamine-phosphate synthase family. Mg(2+) serves as cofactor.

The enzyme catalyses 2-[(2R,5Z)-2-carboxy-4-methylthiazol-5(2H)-ylidene]ethyl phosphate + 4-amino-2-methyl-5-(diphosphooxymethyl)pyrimidine + 2 H(+) = thiamine phosphate + CO2 + diphosphate. The catalysed reaction is 2-(2-carboxy-4-methylthiazol-5-yl)ethyl phosphate + 4-amino-2-methyl-5-(diphosphooxymethyl)pyrimidine + 2 H(+) = thiamine phosphate + CO2 + diphosphate. It catalyses the reaction 4-methyl-5-(2-phosphooxyethyl)-thiazole + 4-amino-2-methyl-5-(diphosphooxymethyl)pyrimidine + H(+) = thiamine phosphate + diphosphate. The protein operates within cofactor biosynthesis; thiamine diphosphate biosynthesis; thiamine phosphate from 4-amino-2-methyl-5-diphosphomethylpyrimidine and 4-methyl-5-(2-phosphoethyl)-thiazole: step 1/1. Its function is as follows. Condenses 4-methyl-5-(beta-hydroxyethyl)thiazole monophosphate (THZ-P) and 2-methyl-4-amino-5-hydroxymethyl pyrimidine pyrophosphate (HMP-PP) to form thiamine monophosphate (TMP). The polypeptide is Thiamine-phosphate synthase (Acidothermus cellulolyticus (strain ATCC 43068 / DSM 8971 / 11B)).